Here is a 374-residue protein sequence, read N- to C-terminus: Ribonuclease D (374 aa).

Residues 3 to 171 (YQLITTDDGL…MAIRLVEETT (169 aa)) enclose the 3'-5' exonuclease domain. Residues 210–289 (KGRHLACLQK…AETQTMDAAE (80 aa)) enclose the HRDC domain.

It belongs to the RNase D family. The cofactor is a divalent metal cation.

The protein resides in the cytoplasm. The catalysed reaction is Exonucleolytic cleavage that removes extra residues from the 3'-terminus of tRNA to produce 5'-mononucleotides.. Its function is as follows. Exonuclease involved in the 3' processing of various precursor tRNAs. Initiates hydrolysis at the 3'-terminus of an RNA molecule and releases 5'-mononucleotides. This chain is Ribonuclease D, found in Musicola paradisiaca (strain Ech703) (Dickeya paradisiaca).